The following is a 298-amino-acid chain: N-acetylmuramic acid 6-phosphate etherase (298 aa).

The 164-residue stretch at Ile-55–Lys-218 folds into the SIS domain. Glu-83 serves as the catalytic Proton donor. Glu-114 is an active-site residue.

This sequence belongs to the GCKR-like family. MurNAc-6-P etherase subfamily. Homodimer.

It catalyses the reaction N-acetyl-D-muramate 6-phosphate + H2O = N-acetyl-D-glucosamine 6-phosphate + (R)-lactate. The protein operates within amino-sugar metabolism; 1,6-anhydro-N-acetylmuramate degradation. Its pathway is amino-sugar metabolism; N-acetylmuramate degradation. It functions in the pathway cell wall biogenesis; peptidoglycan recycling. Functionally, specifically catalyzes the cleavage of the D-lactyl ether substituent of MurNAc 6-phosphate, producing GlcNAc 6-phosphate and D-lactate. Together with AnmK, is also required for the utilization of anhydro-N-acetylmuramic acid (anhMurNAc) either imported from the medium or derived from its own cell wall murein, and thus plays a role in cell wall recycling. This Escherichia coli O8 (strain IAI1) protein is N-acetylmuramic acid 6-phosphate etherase.